We begin with the raw amino-acid sequence, 404 residues long: Sialidase (404 aa).

Residues 1–27 (MKKFIKILKVLSMAIVLSACNINGIFA) form the signal peptide. Arginine 55 provides a ligand contact to substrate. The Proton acceptor role is filled by aspartate 80. BNR repeat units follow at residues 89 to 100 (AKSTDNGQTWDY), 158 to 169 (VYSDDNGETWSD), and 226 to 237 (IYSKDNGETWTM). A substrate-binding site is contributed by arginine 263. The stretch at 273-284 (YISYDMGSTWEV) is one BNR 4 repeat. Residue tyrosine 365 is the Nucleophile of the active site.

Belongs to the glycosyl hydrolase 33 family. In terms of processing, it is possible that the sialidase is cleaved in front of a cysteine within the leader peptide, forming a glyceride thioether bond which links the protein to the membrane. A second proteolytic cleavage releases the mature extracellular protein.

It is found in the secreted. It catalyses the reaction Hydrolysis of alpha-(2-&gt;3)-, alpha-(2-&gt;6)-, alpha-(2-&gt;8)- glycosidic linkages of terminal sialic acid residues in oligosaccharides, glycoproteins, glycolipids, colominic acid and synthetic substrates.. Sialidases have been suggested to be pathogenic factors in microbial infections. This chain is Sialidase, found in Paraclostridium sordellii (Clostridium sordellii).